The following is a 344-amino-acid chain: MESFILLFTNDKLLIFNFIIILLFIKSLSYIIPLIIAIAYLTLIERKIIGSIQKRKGPNIVGIFGLLQPIADGLKLLLKETSLPNSANIFIFIIAPILTFFLALCAWAIMPFNEINFYSNLNIGILYLLAISSLGVYGIIISGWASNSKYAFLGGLRSAAQIISYEVSIGLIIINVLLCSGTLNLKEIVLAQQNIWYIFPLFPLFLMFFISSLAETNRSPFDLPEAEAELVAGYNVEYSAMGFALFFLGEYTNIILISAVSTILFLAGWLPPFDIFLFNWIPNSIWFGFKTIIILVLFIWVRAAFPRYRYDQLIQLGWKIFLPLSLAWLMLTSGILLSYDGFPN.

The next 10 membrane-spanning stretches (helical) occupy residues 18-38 (FIII…IIAI), 58-78 (PNIV…KLLL), 89-109 (IFIF…AWAI), 123-143 (IGIL…IISG), 159-179 (AAQI…VLLC), 195-215 (IWYI…SLAE), 228-248 (AELV…LFFL), 253-273 (NIIL…LPPF), 281-301 (IPNS…FIWV), and 316-336 (LGWK…SGIL).

It belongs to the complex I subunit 1 family.

Its subcellular location is the mitochondrion inner membrane. It catalyses the reaction a ubiquinone + NADH + 5 H(+)(in) = a ubiquinol + NAD(+) + 4 H(+)(out). Functionally, core subunit of the mitochondrial membrane respiratory chain NADH dehydrogenase (Complex I) that is believed to belong to the minimal assembly required for catalysis. Complex I functions in the transfer of electrons from NADH to the respiratory chain. The immediate electron acceptor for the enzyme is believed to be ubiquinone. The protein is NADH-ubiquinone oxidoreductase chain 1 (ND1) of Cyanidium caldarium (Red alga).